The following is a 414-amino-acid chain: Secreted beta-glucosidase sun1 (414 aa).

The signal sequence occupies residues 1-19; sequence MKFNTVALTLATAGSLVTA. The N-linked (GlcNAc...) asparagine glycan is linked to asparagine 80. The span at 115 to 140 shows a compositional bias: low complexity; it reads TSASSSETVQTPAASSSSASSSSTAT. The interval 115-141 is disordered; it reads TSASSSETVQTPAASSSSASSSSTATG. Asparagine 377 carries N-linked (GlcNAc...) asparagine glycosylation.

It belongs to the SUN family. Highly glycosylated.

The protein resides in the secreted. It localises to the cell wall. Cell surface beta-glucosidase involved in cell wall biosynthesis and septation, and thus required for normal growth and correct hyphal morphogenesis. Has hydrolytic activity on linear (1-&gt;3)-beta-D-glucans such as laminaribiose and other laminarioligosaccharides. Also has a minor transferase activity. The sequence is that of Secreted beta-glucosidase sun1 (sun1) from Aspergillus fumigatus (strain ATCC MYA-4609 / CBS 101355 / FGSC A1100 / Af293) (Neosartorya fumigata).